Consider the following 382-residue polypeptide: D-galactonate dehydratase (382 aa).

Asp-183 serves as a coordination point for Mg(2+). His-185 (proton donor) is an active-site residue. Mg(2+)-binding residues include Glu-209 and Glu-235. His-285 (proton acceptor) is an active-site residue. Residues 361–382 (NENPPDWRNPVWRHSDGSIAEW) are disordered.

It belongs to the mandelate racemase/muconate lactonizing enzyme family. GalD subfamily. Mg(2+) is required as a cofactor.

It carries out the reaction D-galactonate = 2-dehydro-3-deoxy-D-galactonate + H2O. Its pathway is carbohydrate acid metabolism; D-galactonate degradation; D-glyceraldehyde 3-phosphate and pyruvate from D-galactonate: step 1/3. Its function is as follows. Catalyzes the dehydration of D-galactonate to 2-keto-3-deoxy-D-galactonate. The polypeptide is D-galactonate dehydratase (Xanthomonas euvesicatoria pv. vesicatoria (strain 85-10) (Xanthomonas campestris pv. vesicatoria)).